The sequence spans 350 residues: Transmembrane protein 185B (350 aa).

Transmembrane regions (helical) follow at residues 16–36, 41–61, 81–101, 111–131, 168–188, 211–231, and 240–260; these read LIYT…DGII, WAVF…ASVG, FKAM…EVLV, FWLL…AACV, WLVV…VVLY, VTMA…EVLL, and TFSY…LMAT.

The protein belongs to the TMEM185 family.

It localises to the membrane. The chain is Transmembrane protein 185B (TMEM185B) from Homo sapiens (Human).